Here is a 310-residue protein sequence, read N- to C-terminus: HPr kinase/phosphorylase (310 aa).

Catalysis depends on residues His138 and Lys159. 153–160 (GDSGIGKS) contacts ATP. Residue Ser160 coordinates Mg(2+). The active-site Proton acceptor; for phosphorylation activity. Proton donor; for dephosphorylation activity is the Asp177. Residues 201 to 210 (LEIRGVGIID) are important for the catalytic mechanism of both phosphorylation and dephosphorylation. Glu202 contributes to the Mg(2+) binding site. Arg243 is a catalytic residue. The tract at residues 264–269 (PVKTGR) is important for the catalytic mechanism of dephosphorylation.

This sequence belongs to the HPrK/P family. As to quaternary structure, homohexamer. The cofactor is Mg(2+).

The catalysed reaction is [HPr protein]-L-serine + ATP = [HPr protein]-O-phospho-L-serine + ADP + H(+). It catalyses the reaction [HPr protein]-O-phospho-L-serine + phosphate + H(+) = [HPr protein]-L-serine + diphosphate. Its function is as follows. Catalyzes the ATP- as well as the pyrophosphate-dependent phosphorylation of a specific serine residue in HPr, a phosphocarrier protein of the phosphoenolpyruvate-dependent sugar phosphotransferase system (PTS). HprK/P also catalyzes the pyrophosphate-producing, inorganic phosphate-dependent dephosphorylation (phosphorolysis) of seryl-phosphorylated HPr (P-Ser-HPr). The two antagonistic activities of HprK/P are regulated by several intracellular metabolites, which change their concentration in response to the absence or presence of rapidly metabolisable carbon sources (glucose, fructose, etc.) in the growth medium. Therefore, by controlling the phosphorylation state of HPr, HPrK/P is a sensor enzyme that plays a major role in the regulation of carbon metabolism and sugar transport: it mediates carbon catabolite repression (CCR), and regulates PTS-catalyzed carbohydrate uptake and inducer exclusion. This Streptococcus equi subsp. equi (strain 4047) protein is HPr kinase/phosphorylase.